The following is a 629-amino-acid chain: tRNA uridine 5-carboxymethylaminomethyl modification enzyme MnmG (629 aa).

FAD contacts are provided by residues 13–18 (GGGHAG), Val125, and Ser180. 273-287 (GPRYCPSIEDKVMRF) contributes to the NAD(+) binding site. Gln370 contributes to the FAD binding site.

This sequence belongs to the MnmG family. As to quaternary structure, homodimer. Heterotetramer of two MnmE and two MnmG subunits. FAD is required as a cofactor.

The protein localises to the cytoplasm. Its function is as follows. NAD-binding protein involved in the addition of a carboxymethylaminomethyl (cmnm) group at the wobble position (U34) of certain tRNAs, forming tRNA-cmnm(5)s(2)U34. The polypeptide is tRNA uridine 5-carboxymethylaminomethyl modification enzyme MnmG (Salmonella arizonae (strain ATCC BAA-731 / CDC346-86 / RSK2980)).